The following is a 369-amino-acid chain: NAD-dependent epimerase/dehydratase FUM13 (369 aa).

Tyr-176 lines the NADP(+) pocket.

The protein belongs to the NAD(P)-dependent epimerase/dehydratase family. Dihydroflavonol-4-reductase subfamily.

Its pathway is mycotoxin biosynthesis. Its function is as follows. NAD-dependent epimerase/dehydratase; part of the gene cluster that mediates the biosynthesis of fumonisins B1 (FB1), B2 (FB2), B3 (FB3), and B4 (FB4), which are carcinogenic mycotoxins. Within the pathway, FUM13 stereospecifically reduces the intermediate 3-keto intermediate 2-amino-3-oxo-12,16-dimethylicosane to the 3-hydroxyl product 2-amino-3-hydroxy-12,16-dimethylicosane. The biosynthesis starts with the FUM1-catalyzed carbon chain assembly from one molecule of acetyl-CoA, eight molecules of malonyl-CoA, and two molecules of methionine (in S-adenosyl form). The C18 polyketide chain is released from the enzyme by a nucleophilic attack of a carbanion, which is derived from R-carbon of alanine by decarboxylation, on the carbonyl carbon of polyketide acyl chain. This step is catalyzed by the pyridoxal 5'-phosphate-dependent aminoacyl transferase FUM8. The resultant 3-keto intermediate is then stereospecifically reduced to a 3-hydroxyl product by reductase FUM13. Subsequent oxidations at C-10 by the cytochrome P450 monooxygenase FUM2, C-14 and C-15 by FUM6, FUM12 or FUM15, tricarballylic esterification of the hydroxyl groups on C-14 and C-15 by acyltransferase FUM14, and C-5 hydroxylation by 2-keto-glutarate-dependent dioxygenase FUM3 furnish the biosynthesis of fumonisins. The tricarballylic moieties are most likely derived from the citric acid cycle, and their addition to the carbon backbone may involve FUM7, FUM10, FUM11 and FUM14. The chain is NAD-dependent epimerase/dehydratase FUM13 from Gibberella moniliformis (strain M3125 / FGSC 7600) (Maize ear and stalk rot fungus).